Here is a 368-residue protein sequence, read N- to C-terminus: 1-deoxy-D-xylulose 5-phosphate reductoisomerase (368 aa).

NADPH-binding residues include Thr-7, Gly-8, Ser-9, Ile-10, Gly-31, Lys-32, Asn-33, and Asn-113. Lys-114 is a 1-deoxy-D-xylulose 5-phosphate binding site. Glu-115 contributes to the NADPH binding site. Asp-133 lines the Mn(2+) pocket. Residues Ser-134, Glu-135, Ser-158, and His-181 each contribute to the 1-deoxy-D-xylulose 5-phosphate site. Glu-135 contributes to the Mn(2+) binding site. Residue Gly-187 participates in NADPH binding. 1-deoxy-D-xylulose 5-phosphate is bound by residues Ser-194, Asn-199, Lys-200, and Glu-203. A Mn(2+)-binding site is contributed by Glu-203.

Belongs to the DXR family. Mg(2+) is required as a cofactor. It depends on Mn(2+) as a cofactor.

It carries out the reaction 2-C-methyl-D-erythritol 4-phosphate + NADP(+) = 1-deoxy-D-xylulose 5-phosphate + NADPH + H(+). It functions in the pathway isoprenoid biosynthesis; isopentenyl diphosphate biosynthesis via DXP pathway; isopentenyl diphosphate from 1-deoxy-D-xylulose 5-phosphate: step 1/6. Its function is as follows. Catalyzes the NADPH-dependent rearrangement and reduction of 1-deoxy-D-xylulose-5-phosphate (DXP) to 2-C-methyl-D-erythritol 4-phosphate (MEP). This chain is 1-deoxy-D-xylulose 5-phosphate reductoisomerase, found in Helicobacter pylori (strain P12).